The following is a 441-amino-acid chain: Histidine--tRNA ligase (441 aa).

Belongs to the class-II aminoacyl-tRNA synthetase family. As to quaternary structure, homodimer.

The protein resides in the cytoplasm. The enzyme catalyses tRNA(His) + L-histidine + ATP = L-histidyl-tRNA(His) + AMP + diphosphate + H(+). The polypeptide is Histidine--tRNA ligase (Synechococcus sp. (strain WH7803)).